Here is a 239-residue protein sequence, read N- to C-terminus: Pyridoxine 5'-phosphate synthase (239 aa).

Residue Asn7 coordinates 3-amino-2-oxopropyl phosphate. Asp9–His10 provides a ligand contact to 1-deoxy-D-xylulose 5-phosphate. Residue Arg18 coordinates 3-amino-2-oxopropyl phosphate. The active-site Proton acceptor is the His43. Positions 45 and 50 each coordinate 1-deoxy-D-xylulose 5-phosphate. Glu70 serves as the catalytic Proton acceptor. A 1-deoxy-D-xylulose 5-phosphate-binding site is contributed by Thr100. The Proton donor role is filled by His191. 3-amino-2-oxopropyl phosphate-binding positions include Gly192 and Gly213 to His214.

The protein belongs to the PNP synthase family. In terms of assembly, homooctamer; tetramer of dimers.

It localises to the cytoplasm. The enzyme catalyses 3-amino-2-oxopropyl phosphate + 1-deoxy-D-xylulose 5-phosphate = pyridoxine 5'-phosphate + phosphate + 2 H2O + H(+). It participates in cofactor biosynthesis; pyridoxine 5'-phosphate biosynthesis; pyridoxine 5'-phosphate from D-erythrose 4-phosphate: step 5/5. Catalyzes the complicated ring closure reaction between the two acyclic compounds 1-deoxy-D-xylulose-5-phosphate (DXP) and 3-amino-2-oxopropyl phosphate (1-amino-acetone-3-phosphate or AAP) to form pyridoxine 5'-phosphate (PNP) and inorganic phosphate. The polypeptide is Pyridoxine 5'-phosphate synthase (Citrifermentans bemidjiense (strain ATCC BAA-1014 / DSM 16622 / JCM 12645 / Bem) (Geobacter bemidjiensis)).